A 147-amino-acid polypeptide reads, in one-letter code: Acidic phospholipase A2 S3-24 (147 aa).

A signal peptide spans 1–19; the sequence is MYPAHLLVLLAVCVSLLGA. The propeptide occupies 20–27; sequence SDMPPQPL. Intrachain disulfides connect C38-C99, C54-C146, C56-C72, C71-C127, C78-C120, C88-C113, and C106-C118. Y55, G57, and G59 together coordinate Ca(2+). Residue H75 is part of the active site. Position 76 (D76) interacts with Ca(2+). The active site involves D121.

The protein belongs to the phospholipase A2 family. Group I subfamily. D49 sub-subfamily. The cofactor is Ca(2+). As to expression, expressed by the venom gland.

The protein resides in the secreted. The catalysed reaction is a 1,2-diacyl-sn-glycero-3-phosphocholine + H2O = a 1-acyl-sn-glycero-3-phosphocholine + a fatty acid + H(+). Snake venom phospholipase A2 (PLA2) that inhibits collagen-induced platelet aggregation. PLA2 catalyzes the calcium-dependent hydrolysis of the 2-acyl groups in 3-sn-phosphoglycerides. The chain is Acidic phospholipase A2 S3-24 from Austrelaps superbus (Lowland copperhead snake).